Here is a 3371-residue protein sequence, read N- to C-terminus: Abnormal spindle-like microcephaly-associated protein homolog (3371 aa).

Phosphoserine is present on residues Ser-212, Ser-215, Ser-300, Ser-325, and Ser-540. The interval 536-559 (RPHFSPVESKTSTVKHTKKVVTSS) is disordered. The Calponin-homology (CH) 1 domain occupies 852 to 988 (KASKEILLAF…LLWKIALAFQ (137 aa)). Residues 989-1014 (VDISLNLDQLKEEIDFLKNTQSMKKT) are a coiled coil. Ser-1035 carries the post-translational modification Phosphoserine. In terms of domain architecture, Calponin-homology (CH) 2 spans 1042–1193 (SESVKLLMDW…YLSFLCARLL (152 aa)). 40 consecutive IQ domains span residues 1198-1227 (ETRA…RDKA), 1396-1427 (EERA…IIIQ), 1469-1500 (KRAA…VLQS), 1564-1593 (TRSA…SIVK), 1587-1616 (ILTS…ATVK), 1610-1639 (LKKA…IAQQ), 1644-1673 (RRAS…AAVS), 1667-1698 (QRKA…VVIQ), 1717-1746 (VRRA…AALK), 1740-1769 (QSAA…SALK), 1790-1819 (TRTA…AAVK), 1813-1844 (EHEA…SVIQ), 1863-1894 (LRRA…IIIQ), 1886-1917 (QQRC…HLIQ), 1936-1965 (TKXA…AAAT), 1959-1990 (MHQA…VIIQ), 2009-2040 (VKKA…TLIK), 2032-2063 (MHMA…IIIQ), 2082-2113 (ILKA…TLIQ), 2105-2134 (MRTA…VTKT), 2155-2186 (LRRS…AVIQ), 2227-2258 (LQKA…TVLQ), 2250-2281 (MRRA…QVIQ), 2300-2331 (QRHS…TLIQ), 2323-2354 (MHAS…VFVQ), 2396-2427 (MHRA…VLIQ), 2446-2477 (WRHS…VIIQ), 2539-2570 (RHQA…VFVQ), 2580-2609 (RTQA…AATR), 2603-2634 (MHLA…VVIQ), 2653-2682 (IQKS…KKMA), 2729-2760 (QRKA…RIQS), 2751-2780 (QRRA…AALT), 2824-2853 (IRSS…STIK), 2847-2878 (LKDS…RIQA), 2869-2900 (EVKA…RIIQ), 2944-2973 (RHQA…AALT), 2994-3025 (LKKS…RLLH), 3096-3125 (HSRA…RIAK), and 3119-3150 (FNKR…IRQR).

The protein resides in the cytoplasm. Its subcellular location is the cytoskeleton. It is found in the spindle. The protein localises to the nucleus. Its function is as follows. Probable role in mitotic spindle regulation and coordination of mitotic processes. May have a preferential role in regulating neurogenesis. The sequence is that of Abnormal spindle-like microcephaly-associated protein homolog (ASPM) from Bos taurus (Bovine).